The chain runs to 1098 residues: Trehalose synthase complex regulatory subunit TSL1 (1098 aa).

A phosphoserine mark is found at Ser49, Ser53, Ser56, Ser71, Ser77, Ser135, Ser147, and Ser161. Disordered stretches follow at residues 59–86 (APAP…RASS), 129–168 (SVER…QQQQ), and 192–244 (SQTS…PSIK). Over residues 72-86 (RSATRSPSAFNRASS) the composition is skewed to polar residues. Tandem repeats lie at residues 144-150 (RIASPIQ) and 158-164 (RIASPIQ). The interval 144-164 (RIASPIQHEHDSGSRIASPIQ) is 2 X 7 AA repeats of R-I-A-S-P-I-Q. Positions 213–227 (RPTSAATSLVNRTKQ) are enriched in polar residues. Residues 228–242 (GSASSGSSGSSAPPS) show a composition bias toward low complexity. Position 229 is a phosphoserine (Ser229). Position 251 is a phosphothreonine (Thr251). The segment at 274–297 (ADISSSETSSQHNESDPDDLTTAP) is disordered. The residue at position 303 (Ser303) is a Phosphoserine. The TPS complex domain stretch occupies residues 320–812 (GGYSNKSKLK…FNQEGSKIFK (493 aa)). At Thr815 the chain carries Phosphothreonine. The tract at residues 1000 to 1027 (SSGQITNIQTPSQQNPSDQEQQPPASPT) is disordered.

In the C-terminal section; belongs to the glycosyltransferase 20 family. The trehalose synthase complex is composed of the two catalytic subunits TPS1 and TPS2, and at least one of the two regulatory subunits TPS3 or TSL1.

Its subcellular location is the cytoplasm. In terms of biological role, regulatory subunit of the trehalose synthase complex that catalyzes the production of trehalose from glucose-6-phosphate and UDP-glucose in a two step process. May stabilize the trehalose synthase complex, and confer sensitivity to physiological concentrations of phosphate and to fructose 6-phosphate. The protein is Trehalose synthase complex regulatory subunit TSL1 (TSL1) of Saccharomyces cerevisiae (strain ATCC 204508 / S288c) (Baker's yeast).